The primary structure comprises 515 residues: Fatty acyl-CoA reductase 2 (515 aa).

The Cytoplasmic segment spans residues 1 to 464 (MSMIAAFYSN…KAKQHLRRLR (464 aa)). Residues 465-484 (NIHYLFNTALFLIIWRLLIA) traverse the membrane as a helical segment. Residues 485–515 (RSQMARNVWFFIVSFCYKFISYFRASSTLKV) are Peroxisomal-facing.

The protein belongs to the fatty acyl-CoA reductase family. In terms of tissue distribution, specifically expressed in the meibomian glands of the eyelid and the sebaceous glands of the skin. Also expressed in the brain where large quantities of ether lipids are synthesized.

It is found in the peroxisome membrane. The enzyme catalyses a long-chain fatty acyl-CoA + 2 NADPH + 2 H(+) = a long-chain primary fatty alcohol + 2 NADP(+) + CoA. It catalyses the reaction hexadecanoyl-CoA + 2 NADPH + 2 H(+) = hexadecan-1-ol + 2 NADP(+) + CoA. It carries out the reaction octadecanoyl-CoA + 2 NADPH + 2 H(+) = octadecan-1-ol + 2 NADP(+) + CoA. The catalysed reaction is a very long-chain fatty acyl-CoA + 2 NADPH + 2 H(+) = a very long-chain primary fatty alcohol + 2 NADP(+) + CoA. The enzyme catalyses an ultra-long-chain fatty acyl-CoA + 2 NADPH + 2 H(+) = an ultra long-chain primary fatty alcohol + 2 NADP(+) + CoA. It catalyses the reaction eicosanoyl-CoA + 2 NADPH + 2 H(+) = eicosan-1-ol + 2 NADP(+) + CoA. It carries out the reaction docosanoyl-CoA + 2 NADPH + 2 H(+) = docosan-1-ol + 2 NADP(+) + CoA. The catalysed reaction is tetracosanoyl-CoA + 2 NADPH + 2 H(+) = tetracosan-1-ol + 2 NADP(+) + CoA. The enzyme catalyses hexacosanoyl-CoA + 2 NADPH + 2 H(+) = hexacosan-1-ol + 2 NADP(+) + CoA. It catalyses the reaction octacosanoyl-CoA + 2 NADPH + 2 H(+) = octacosan-1-ol + 2 NADP(+) + CoA. It carries out the reaction triacontanoyl-CoA + 2 NADPH + 2 H(+) = triacontan-1-ol + 2 NADP(+) + CoA. The catalysed reaction is 18-methylnonadecanoyl-CoA + 2 NADPH + 2 H(+) = 18-methylnonadecan-1-ol + 2 NADP(+) + CoA. The enzyme catalyses 20-methylheneicosanoyl-CoA + 2 NADPH + 2 H(+) = 20-methylheneicosan-1-ol + 2 NADP(+) + CoA. It catalyses the reaction 22-methyltricosanoyl-CoA + 2 NADPH + 2 H(+) = 22-methyltricosan-1-ol + 2 NADP(+) + CoA. It carries out the reaction 24-methylpentacosanoyl-CoA + 2 NADPH + 2 H(+) = 24-methylpentacosan-1-ol + 2 NADP(+) + CoA. Catalyzes the reduction of saturated but not unsaturated C16 or C18 fatty acyl-CoA to fatty alcohols. A lower activity can be observed with shorter fatty acyl-CoA substrates. Can produce very long-chain and ultra long-chain FAls, regardless of whether they have a straight or branched chain. It may play a role in the production of ether lipids/plasmalogens and wax monoesters which synthesis requires fatty alcohols as substrates. This Mus musculus (Mouse) protein is Fatty acyl-CoA reductase 2.